A 347-amino-acid polypeptide reads, in one-letter code: tRNA N6-adenosine threonylcarbamoyltransferase (347 aa).

Histidine 110 and histidine 114 together coordinate Fe cation. Substrate-binding positions include 133–137, aspartate 168, glycine 181, aspartate 185, and asparagine 277; that span reads VVSGG. Residue aspartate 305 participates in Fe cation binding.

This sequence belongs to the KAE1 / TsaD family. The cofactor is Fe(2+).

Its subcellular location is the cytoplasm. The catalysed reaction is L-threonylcarbamoyladenylate + adenosine(37) in tRNA = N(6)-L-threonylcarbamoyladenosine(37) in tRNA + AMP + H(+). Required for the formation of a threonylcarbamoyl group on adenosine at position 37 (t(6)A37) in tRNAs that read codons beginning with adenine. Is involved in the transfer of the threonylcarbamoyl moiety of threonylcarbamoyl-AMP (TC-AMP) to the N6 group of A37, together with TsaE and TsaB. TsaD likely plays a direct catalytic role in this reaction. This Kineococcus radiotolerans (strain ATCC BAA-149 / DSM 14245 / SRS30216) protein is tRNA N6-adenosine threonylcarbamoyltransferase.